A 179-amino-acid polypeptide reads, in one-letter code: Large ribosomal subunit protein uL6 (179 aa).

Belongs to the universal ribosomal protein uL6 family. In terms of assembly, part of the 50S ribosomal subunit.

In terms of biological role, this protein binds to the 23S rRNA, and is important in its secondary structure. It is located near the subunit interface in the base of the L7/L12 stalk, and near the tRNA binding site of the peptidyltransferase center. The protein is Large ribosomal subunit protein uL6 of Kineococcus radiotolerans (strain ATCC BAA-149 / DSM 14245 / SRS30216).